Consider the following 104-residue polypeptide: Nucleoid-associated protein Dtur_0258 (104 aa).

The interval 84–104 is disordered; sequence EKSAEKMGSLTDGLPLPPGLF.

Belongs to the YbaB/EbfC family. In terms of assembly, homodimer.

The protein localises to the cytoplasm. It localises to the nucleoid. Functionally, binds to DNA and alters its conformation. May be involved in regulation of gene expression, nucleoid organization and DNA protection. This is Nucleoid-associated protein Dtur_0258 from Dictyoglomus turgidum (strain DSM 6724 / Z-1310).